The chain runs to 234 residues: Transmembrane protein 65 (234 aa).

Residues 1–55 (MSRLLPLLGSRTARSLRPGPAAAPRLPSWCCCGRGLLALGVPGGPRLLGTHPKKE) constitute a mitochondrion transit peptide. Residues 56-110 (PMEALNTAQGARDFIYSLHSTERSCLLKELHRFESIAIAQEKLEALPPTPGQLRY) are Cytoplasmic-facing. Residues 111–131 (VFFHNAIPFVGFGFLDNAIMI) traverse the membrane as a helical segment. The Extracellular portion of the chain corresponds to 132-138 (VAGTQIE). The chain crosses the membrane as a helical span at residues 139–159 (LSIGIILGISTMAAAALGNLV). Over 160–203 (SDLAGLGLAGYVEALASRLGLSIPDLTPKQVDMWQTRVSTHLGK) the chain is Cytoplasmic. A helical transmembrane segment spans residues 204 to 224 (AVGVTIGCILGMFPLIFFGGS). Residues 225–234 (EEDEKLETTN) are Extracellular-facing.

As to quaternary structure, monomer. Homodimer. Interacts with GJA1. Interacts weakly with DSP. Interacts with SCN1B. In terms of tissue distribution, predominantly expressed in the ventricular tissue (at protein level).

The protein resides in the cell membrane. It is found in the mitochondrion inner membrane. Functionally, essential for maintaining proper cardiac intercalated disk (ICD) structure and function as well as cardiac conduction velocity in the heart. Its association with SCN1B is required for stabilizing the perinexus in the ICD and for localization of GJA1 and SCN5A to the ICD. May regulate the function of the gap junction protein GJA1 and may contribute to the stability and proper localization of GJA1 to cardiac intercalated disk thereby regulating gap junction communication. Regulates mitochondrial respiration and mitochondrial DNA copy number maintenance. This Mus musculus (Mouse) protein is Transmembrane protein 65 (Tmem65).